The sequence spans 325 residues: Acetyl-coenzyme A carboxylase carboxyl transferase subunit alpha (325 aa).

The 258-residue stretch at 35–292 folds into the CoA carboxyltransferase C-terminal domain; the sequence is EINKLEARLE…DDVLKRSLRE (258 aa).

It belongs to the AccA family. In terms of assembly, acetyl-CoA carboxylase is a heterohexamer composed of biotin carboxyl carrier protein (AccB), biotin carboxylase (AccC) and two subunits each of ACCase subunit alpha (AccA) and ACCase subunit beta (AccD).

It is found in the cytoplasm. It catalyses the reaction N(6)-carboxybiotinyl-L-lysyl-[protein] + acetyl-CoA = N(6)-biotinyl-L-lysyl-[protein] + malonyl-CoA. It participates in lipid metabolism; malonyl-CoA biosynthesis; malonyl-CoA from acetyl-CoA: step 1/1. Functionally, component of the acetyl coenzyme A carboxylase (ACC) complex. First, biotin carboxylase catalyzes the carboxylation of biotin on its carrier protein (BCCP) and then the CO(2) group is transferred by the carboxyltransferase to acetyl-CoA to form malonyl-CoA. The chain is Acetyl-coenzyme A carboxylase carboxyl transferase subunit alpha from Anoxybacillus flavithermus (strain DSM 21510 / WK1).